The following is an 827-amino-acid chain: DNA gyrase subunit A (827 aa).

Positions 38-501 constitute a Topo IIA-type catalytic domain; it reads LPDARDGLKP…SYENIDIEDL (464 aa). Residue Tyr126 is the O-(5'-phospho-DNA)-tyrosine intermediate of the active site. Residues 528 to 534 carry the GyrA-box motif; that stretch reads QNRGGKG.

It belongs to the type II topoisomerase GyrA/ParC subunit family. In terms of assembly, heterotetramer, composed of two GyrA and two GyrB chains. In the heterotetramer, GyrA contains the active site tyrosine that forms a transient covalent intermediate with DNA, while GyrB binds cofactors and catalyzes ATP hydrolysis.

The protein localises to the cytoplasm. It carries out the reaction ATP-dependent breakage, passage and rejoining of double-stranded DNA.. Its function is as follows. A type II topoisomerase that negatively supercoils closed circular double-stranded (ds) DNA in an ATP-dependent manner to modulate DNA topology and maintain chromosomes in an underwound state. Negative supercoiling favors strand separation, and DNA replication, transcription, recombination and repair, all of which involve strand separation. Also able to catalyze the interconversion of other topological isomers of dsDNA rings, including catenanes and knotted rings. Type II topoisomerases break and join 2 DNA strands simultaneously in an ATP-dependent manner. The sequence is that of DNA gyrase subunit A from Helicobacter pylori (strain ATCC 700392 / 26695) (Campylobacter pylori).